The chain runs to 393 residues: S-adenosylmethionine synthase 2 (393 aa).

Glu9 is a Mg(2+) binding site. Position 15 (His15) interacts with ATP. K(+) is bound at residue Glu43. L-methionine-binding residues include Glu56 and Gln99. ATP contacts are provided by residues 167-169 (DGK), 235-238 (SGRF), Asp246, 252-253 (RK), Ala269, Lys273, and Lys277. Asp246 is an L-methionine binding site. Lys277 lines the L-methionine pocket.

This sequence belongs to the AdoMet synthase family. Homotetramer. Mn(2+) serves as cofactor. Mg(2+) is required as a cofactor. Requires Co(2+) as cofactor. It depends on K(+) as a cofactor.

The protein localises to the cytoplasm. It catalyses the reaction L-methionine + ATP + H2O = S-adenosyl-L-methionine + phosphate + diphosphate. Its pathway is amino-acid biosynthesis; S-adenosyl-L-methionine biosynthesis; S-adenosyl-L-methionine from L-methionine: step 1/1. In terms of biological role, catalyzes the formation of S-adenosylmethionine from methionine and ATP. The reaction comprises two steps that are both catalyzed by the same enzyme: formation of S-adenosylmethionine (AdoMet) and triphosphate, and subsequent hydrolysis of the triphosphate. May be involved in the synthesis of betain in response to abiotic stress such as high salinity. The chain is S-adenosylmethionine synthase 2 (SAMS2) from Beta vulgaris (Sugar beet).